Reading from the N-terminus, the 243-residue chain is MLPFWIALQFLGSLPIRLPGMPSPEELGRSLLFYPLVGAVFGTLLLGFNTLLSGAPLMLHAALVLTAWVLLSGGLHLDGLADSADAWLGGFGDRERTLKIMKDPRSGPIAVVTLVLVLLLKFAAILALIESHASVWLLLAPVIGRAAMLGLFLGTPYVRSGGLGQALADHLPRGPGRKVLLATAIACVLLAGWSGVAVLLVCAVCFFWLRQLMMRRLGGCTGDTAGALLELLELAVLLTLALL.

Transmembrane regions (helical) follow at residues 31–51, 55–75, 109–129, 133–153, and 188–208; these read LLFY…FNTL, APLM…SGGL, IAVV…LALI, ASVW…GLFL, and VLLA…CFFW.

Belongs to the CobS family. The cofactor is Mg(2+).

The protein resides in the cell inner membrane. The catalysed reaction is alpha-ribazole + adenosylcob(III)inamide-GDP = adenosylcob(III)alamin + GMP + H(+). It catalyses the reaction alpha-ribazole 5'-phosphate + adenosylcob(III)inamide-GDP = adenosylcob(III)alamin 5'-phosphate + GMP + H(+). It participates in cofactor biosynthesis; adenosylcobalamin biosynthesis; adenosylcobalamin from cob(II)yrinate a,c-diamide: step 7/7. Functionally, joins adenosylcobinamide-GDP and alpha-ribazole to generate adenosylcobalamin (Ado-cobalamin). Also synthesizes adenosylcobalamin 5'-phosphate from adenosylcobinamide-GDP and alpha-ribazole 5'-phosphate. The chain is Adenosylcobinamide-GDP ribazoletransferase from Pseudomonas syringae pv. syringae (strain B728a).